The sequence spans 241 residues: Probable septum site-determining protein MinC (241 aa).

This sequence belongs to the MinC family. As to quaternary structure, interacts with MinD and FtsZ.

Its function is as follows. Cell division inhibitor that blocks the formation of polar Z ring septums. Rapidly oscillates between the poles of the cell to destabilize FtsZ filaments that have formed before they mature into polar Z rings. Prevents FtsZ polymerization. This is Probable septum site-determining protein MinC from Rhizobium rhizogenes (strain K84 / ATCC BAA-868) (Agrobacterium radiobacter).